We begin with the raw amino-acid sequence, 131 residues long: D-ribose pyranase (131 aa).

Catalysis depends on histidine 20, which acts as the Proton donor. Residues aspartate 28, histidine 98, and 120–122 each bind substrate; that span reads YAN.

It belongs to the RbsD / FucU family. RbsD subfamily. In terms of assembly, homodecamer.

It localises to the cytoplasm. The catalysed reaction is beta-D-ribopyranose = beta-D-ribofuranose. It participates in carbohydrate metabolism; D-ribose degradation; D-ribose 5-phosphate from beta-D-ribopyranose: step 1/2. Its function is as follows. Catalyzes the interconversion of beta-pyran and beta-furan forms of D-ribose. The protein is D-ribose pyranase of Bacillus cereus (strain ZK / E33L).